We begin with the raw amino-acid sequence, 563 residues long: Phosphomethylpyrimidine synthase (563 aa).

Substrate-binding positions include Asn-180, Met-209, Tyr-238, His-274, 294–296 (SRG), 335–338 (DGLR), and Glu-374. His-378 is a binding site for Zn(2+). Tyr-401 serves as a coordination point for substrate. His-442 is a binding site for Zn(2+). [4Fe-4S] cluster-binding residues include Cys-522, Cys-525, and Cys-530.

It belongs to the ThiC family. [4Fe-4S] cluster serves as cofactor.

It catalyses the reaction 5-amino-1-(5-phospho-beta-D-ribosyl)imidazole + S-adenosyl-L-methionine = 4-amino-2-methyl-5-(phosphooxymethyl)pyrimidine + CO + 5'-deoxyadenosine + formate + L-methionine + 3 H(+). It functions in the pathway cofactor biosynthesis; thiamine diphosphate biosynthesis. Its function is as follows. Catalyzes the synthesis of the hydroxymethylpyrimidine phosphate (HMP-P) moiety of thiamine from aminoimidazole ribotide (AIR) in a radical S-adenosyl-L-methionine (SAM)-dependent reaction. The polypeptide is Phosphomethylpyrimidine synthase (Geobacillus thermodenitrificans (strain NG80-2)).